Consider the following 660-residue polypeptide: Bifunctional polymyxin resistance protein ArnA (660 aa).

The tract at residues methionine 1–isoleucine 304 is formyltransferase ArnAFT. Histidine 104 functions as the Proton donor; for formyltransferase activity in the catalytic mechanism. (6R)-10-formyltetrahydrofolate is bound by residues arginine 114 and valine 136 to aspartate 140. The segment at arginine 314–alanine 660 is dehydrogenase ArnADH. NAD(+)-binding positions include aspartate 347 and aspartate 368–isoleucine 369. Residues alanine 393, tyrosine 398, and threonine 432–serine 433 contribute to the UDP-alpha-D-glucuronate site. The Proton acceptor; for decarboxylase activity role is filled by glutamate 434. UDP-alpha-D-glucuronate contacts are provided by residues arginine 460, asparagine 492, lysine 526–arginine 535, and tyrosine 613. Catalysis depends on arginine 619, which acts as the Proton donor; for decarboxylase activity.

The protein in the N-terminal section; belongs to the Fmt family. UDP-L-Ara4N formyltransferase subfamily. In the C-terminal section; belongs to the NAD(P)-dependent epimerase/dehydratase family. UDP-glucuronic acid decarboxylase subfamily. As to quaternary structure, homohexamer, formed by a dimer of trimers.

It catalyses the reaction UDP-alpha-D-glucuronate + NAD(+) = UDP-beta-L-threo-pentopyranos-4-ulose + CO2 + NADH. The enzyme catalyses UDP-4-amino-4-deoxy-beta-L-arabinose + (6R)-10-formyltetrahydrofolate = UDP-4-deoxy-4-formamido-beta-L-arabinose + (6S)-5,6,7,8-tetrahydrofolate + H(+). The protein operates within nucleotide-sugar biosynthesis; UDP-4-deoxy-4-formamido-beta-L-arabinose biosynthesis; UDP-4-deoxy-4-formamido-beta-L-arabinose from UDP-alpha-D-glucuronate: step 1/3. Its pathway is nucleotide-sugar biosynthesis; UDP-4-deoxy-4-formamido-beta-L-arabinose biosynthesis; UDP-4-deoxy-4-formamido-beta-L-arabinose from UDP-alpha-D-glucuronate: step 3/3. It participates in bacterial outer membrane biogenesis; lipopolysaccharide biosynthesis. In terms of biological role, bifunctional enzyme that catalyzes the oxidative decarboxylation of UDP-glucuronic acid (UDP-GlcUA) to UDP-4-keto-arabinose (UDP-Ara4O) and the addition of a formyl group to UDP-4-amino-4-deoxy-L-arabinose (UDP-L-Ara4N) to form UDP-L-4-formamido-arabinose (UDP-L-Ara4FN). The modified arabinose is attached to lipid A and is required for resistance to polymyxin and cationic antimicrobial peptides. The polypeptide is Bifunctional polymyxin resistance protein ArnA (Enterobacter sp. (strain 638)).